We begin with the raw amino-acid sequence, 504 residues long: DnaJ homolog subfamily C member 3 (504 aa).

Positions 1–31 are cleaved as a signal peptide; sequence MVAPGSVTSRLGSVFPFLLVLVDLQYEGAEC. TPR repeat units lie at residues 37–70, 72–104, 105–138, 154–187, 189–221, 222–255, 268–301, 306–339, and 340–373; these read VEKH…DPDN, IAYY…KMDF, TAAR…NPSE, MQRL…CVWD, ELRE…KNDN, TEAF…DQDH, LNKL…EPGV, IRSK…EPDN, and VNAL…NEND. Cys248 and Cys258 are joined by a disulfide. The residue at position 274 (Ser274) is a Phosphoserine. The cysteines at positions 313 and 329 are disulfide-linked. The flexible linker stretch occupies residues 375–393; it reads QIREGLEKAQRLLKQSQRR. In terms of domain architecture, J spans 394-462; sequence DYYKILGVKR…EMRKKFDDGE (69 aa). Residues 451-481 are disordered; it reads DPEMRKKFDDGEDPLDAESQQGGGGNPFHRS.

Interacts with EIF2AK4/GCN2; this interaction occurs under endoplasmic reticulum (ER) stress, hypothermic and amino acid starving stress conditions and inhibits EIF2AK4/GCN2 kinase activity. Interacts with EIF2AK3. Interacts with EIF2AK2. Forms a trimeric complex with DNAJB1 and HSPA8. Interacts with THAP12.

It localises to the endoplasmic reticulum. Functionally, involved in the unfolded protein response (UPR) during endoplasmic reticulum (ER) stress. Acts as a negative regulator of the EIF2AK4/GCN2 kinase activity by preventing the phosphorylation of eIF-2-alpha at 'Ser-52' and hence attenuating general protein synthesis under ER stress, hypothermic and amino acid starving stress conditions. Co-chaperone of HSPA8/HSC70, it stimulates its ATPase activity. May inhibit both the autophosphorylation of EIF2AK2/PKR and the ability of EIF2AK2 to catalyze phosphorylation of the EIF2A. May inhibit EIF2AK3/PERK activity. The protein is DnaJ homolog subfamily C member 3 (DNAJC3) of Bos taurus (Bovine).